A 700-amino-acid chain; its full sequence is ABC transporter B family member 26, chloroplastic (700 aa).

A chloroplast-targeting transit peptide spans 1 to 59 (MAQQVLGCTSRPIRVSLHRCSVITTSDTIRRKNLRFVRNPRLSFSLQSSTRNYRLPSIN). The next 3 membrane-spanning stretches (helical) occupy residues 137–157 (WVIF…ITIP), 182–202 (LVTL…FFGI), and 268–288 (LIYL…ICCI). The ABC transmembrane type-1 domain maps to 139-421 (IFAAFSTLIV…VGDNLSSLMQ (283 aa)). In terms of domain architecture, ABC transporter spans 455-694 (IEFVDVSFSY…DGLYARLTKR (240 aa)). An ATP-binding site is contributed by 490–497 (GLSGSGKS).

The protein belongs to the ABC transporter superfamily. ABCB family. Multidrug resistance exporter (TC 3.A.1.201) subfamily.

The protein resides in the plastid. Its subcellular location is the chloroplast membrane. This chain is ABC transporter B family member 26, chloroplastic (ABCB26), found in Arabidopsis thaliana (Mouse-ear cress).